A 564-amino-acid polypeptide reads, in one-letter code: Mercuric reductase (564 aa).

In terms of domain architecture, HMA spans 1-65; it reads MSTLKITGMT…AVAGLGYRAT (65 aa). Residues C11 and C14 each coordinate a metal cation. Residues A109, G129, and T134 each coordinate FAD. Cysteines 135 and 140 form a disulfide. FAD is bound by residues K144, A210, D406, and V414. The Hg(2+) site is built by C561 and C562.

The protein belongs to the class-I pyridine nucleotide-disulfide oxidoreductase family. Homodimer. FAD is required as a cofactor.

The enzyme catalyses Hg + NADP(+) + H(+) = Hg(2+) + NADPH. Its function is as follows. Resistance to Hg(2+) in bacteria appears to be governed by a specialized system which includes mercuric reductase. MerA protein is responsible for volatilizing mercury as Hg(0). The chain is Mercuric reductase (merA) from Shigella flexneri.